A 317-amino-acid chain; its full sequence is Lipase 1 (317 aa).

Residues 1 to 18 (MLLKRLCFAALFSLSMVG) form the signal peptide. A lipid anchor (N-palmitoyl cysteine) is attached at cysteine 19. Cysteine 19 carries S-diacylglycerol cysteine lipidation. The AB hydrolase-1 domain maps to 69 to 296 (PLLLIHGFGG…MEDVGHVPMV (228 aa)). Residue histidine 74 is part of the active site. The active-site Nucleophile is serine 142. Catalysis depends on charge relay system residues glutamate 270 and histidine 292.

It is found in the cell outer membrane. It catalyses the reaction a triacylglycerol + H2O = a diacylglycerol + a fatty acid + H(+). This chain is Lipase 1 (lip1), found in Psychrobacter immobilis.